Here is a 119-residue protein sequence, read N- to C-terminus: Large ribosomal subunit protein bL20 (119 aa).

Belongs to the bacterial ribosomal protein bL20 family.

Its function is as follows. Binds directly to 23S ribosomal RNA and is necessary for the in vitro assembly process of the 50S ribosomal subunit. It is not involved in the protein synthesizing functions of that subunit. The chain is Large ribosomal subunit protein bL20 from Sorangium cellulosum (strain So ce56) (Polyangium cellulosum (strain So ce56)).